A 346-amino-acid polypeptide reads, in one-letter code: Protein RecA (346 aa).

65–72 (GPESSGKT) provides a ligand contact to ATP.

Belongs to the RecA family.

It is found in the cytoplasm. In terms of biological role, can catalyze the hydrolysis of ATP in the presence of single-stranded DNA, the ATP-dependent uptake of single-stranded DNA by duplex DNA, and the ATP-dependent hybridization of homologous single-stranded DNAs. It interacts with LexA causing its activation and leading to its autocatalytic cleavage. This is Protein RecA from Enterococcus hirae (strain ATCC 9790 / DSM 20160 / JCM 8729 / LMG 6399 / NBRC 3181 / NCIMB 6459 / NCDO 1258 / NCTC 12367 / WDCM 00089 / R).